Reading from the N-terminus, the 1303-residue chain is Latent-transforming growth factor beta-binding protein 3 (1303 aa).

The signal sequence occupies residues 1 to 43 (MPGPRGAAGGLAPEMRGAGAAGLLALLLLLLLLLLGLGGRVEG). N89 carries N-linked (GlcNAc...) asparagine glycosylation. An EGF-like 1 domain is found at 109–141 (RVVVCPLPCMNGGQCSSRNQCLCPPDFTGRFCQ). Cystine bridges form between C113–C123, C117–C129, C131–C140, C279–C303, C289–C316, and C304–C319. The disordered stretch occupies residues 247–282 (SSNAESAAPSQHLLPHPKPSHPRPPTQKPLGRCFQD). In terms of domain architecture, TB 1 spans 277-331 (GRCFQDTLPKQPCGSNPLPGLTKQEDCCGSIGTAWGQSKCHKCPQLQYTGVQKPG). N-linked (GlcNAc...) asparagine glycosylation occurs at N349. Residues 355–395 (DINECAMPGVCRHGDCLNNPGSYRCVCPPGHSLGPSRTQCI) form the EGF-like 2; calcium-binding domain. 7 disulfide bridges follow: C359–C370, C365–C379, C381–C394, C405–C428, C415–C440, C429–C443, and C430–C455. The 53-residue stretch at 403–455 (SLCFRLVSPEHQCQHPLTTRLTRQLCCCSVGKAWGARCQRCPTDGTAAFKEIC) folds into the TB 2 domain. The disordered stretch occupies residues 478–552 (FSLFLHPDGP…ISRPSPPTMR (75 aa)). Low complexity predominate over residues 529–540 (PTATTTPARPYP). The region spanning 574–615 (ETDECRLNQNICGHGECVPGPPDYSCHCNPGYRSHPQHRYCV) is the EGF-like 3 domain. 37 disulfide bridges follow: C578–C590, C585–C599, C601–C614, C620–C632, C625–C641, C664–C676, C670–C685, C687–C701, C748–C759, C754–C768, C770–C783, C789–C800, C795–C809, C811–C824, C830–C841, C836–C850, C852–C864, C870–C883, C877–C892, C894–C907, C919–C942, C929–C954, C943–C959, C944–C971, C997–C1010, C1005–C1019, C1021–C1034, C1040–C1051, C1046–C1060, C1062–C1075, C1086–C1097, C1092–C1106, C1108–C1121, C1138–C1162, C1148–C1174, C1163–C1177, and C1164–C1186. The 44-residue stretch at 616–659 (DVNECEAEPCGPGRGICMNTGGSYNCHCNRGYRLHVGAGGRSCV) folds into the EGF-like 4; calcium-binding domain. Residues 660-702 (DLNECAKPHLCGDGGFCINFPGHYKCNCYPGYRLKASRPPVCE) form the EGF-like 5; calcium-binding domain. The 41-residue stretch at 744–784 (DVNECAEGSPCSPGWCENLPGSFRCTCAQGYAPAPDGRSCL) folds into the EGF-like 6; calcium-binding domain. The EGF-like 7; calcium-binding domain occupies 785 to 825 (DVDECEAGDVCDNGICSNTPGSFQCQCLSGYHLSRDRSHCE). Residues 826–865 (DIDECDFPAACIGGDCINTNGSYRCLCPQGHRLVGGRKCQ) enclose the EGF-like 8; calcium-binding domain. A glycan (N-linked (GlcNAc...) asparagine) is linked at N845. In terms of domain architecture, EGF-like 9; calcium-binding spans 866–908 (DIDECSQDPSLCLPHGACKNLQGSYVCVCDEGFTPTQDQHGCE). Residues 917 to 971 (KECYLNFDDTVFCDSVLATNVTQQECCCSLGAGWGDHCEIYPCPVYSSAEFHSLC) enclose the TB 3 domain. A glycan (N-linked (GlcNAc...) asparagine) is linked at N936. In terms of domain architecture, EGF-like 10; calcium-binding spans 993–1035 (DIDECMLFGSEICKEGKCVNTQPGYECYCKQGFYYDGNLLECV). The region spanning 1036 to 1076 (DVDECLDESNCRNGVCENTRGGYRCACTPPAEYSPAQRQCL) is the EGF-like 11; calcium-binding domain. One can recognise an EGF-like 12; calcium-binding domain in the interval 1082–1122 (DVDECQDPAACRPGRCVNLPGSYRCECRPPWVPGPSGRDCQ). The TB 4 domain maps to 1136-1186 (DVCWSQRGEDGMCAGPLAGPALTFDDCCCRQGRGWGAQCRPCPPRGAGSHC). Residues 1188–1198 (TSQSESNSFWD) show a composition bias toward polar residues. Positions 1188-1219 (TSQSESNSFWDTSPLLLGKPPRDEDSSEEDSD) are disordered. In terms of domain architecture, EGF-like 13; calcium-binding spans 1254–1298 (DIDECRELNQRGLLCKSERCVNTSGSFRCVCKAGFARSRPHGACV). 2 disulfide bridges follow: C1258/C1273 and C1268/C1282. A glycan (N-linked (GlcNAc...) asparagine) is linked at N1275.

It belongs to the LTBP family. Forms part of the large latent transforming growth factor beta precursor complex; removal is essential for activation of complex. Interacts with EFEMP2. In terms of processing, contains hydroxylated asparagine residues. Two intrachain disulfide bonds from the TB3 domain are rearranged upon TGFB1 binding, and form interchain bonds with TGFB1 propeptide, anchoring it to the extracellular matrix. As to expression, isoform 2: Expressed prominently in heart, skeletal muscle, prostate, testis, small intestine and ovary. Isoform 1: Strongly expressed in pancreas and liver.

It is found in the secreted. The protein localises to the extracellular space. The protein resides in the extracellular matrix. Key regulator of transforming growth factor beta (TGFB1, TGFB2 and TGFB3) that controls TGF-beta activation by maintaining it in a latent state during storage in extracellular space. Associates specifically via disulfide bonds with the Latency-associated peptide (LAP), which is the regulatory chain of TGF-beta, and regulates integrin-dependent activation of TGF-beta. This Homo sapiens (Human) protein is Latent-transforming growth factor beta-binding protein 3 (LTBP3).